The primary structure comprises 179 residues: Adenine phosphoribosyltransferase (179 aa).

The protein belongs to the purine/pyrimidine phosphoribosyltransferase family. As to quaternary structure, homodimer.

The protein resides in the cytoplasm. It carries out the reaction AMP + diphosphate = 5-phospho-alpha-D-ribose 1-diphosphate + adenine. The protein operates within purine metabolism; AMP biosynthesis via salvage pathway; AMP from adenine: step 1/1. In terms of biological role, catalyzes a salvage reaction resulting in the formation of AMP, that is energically less costly than de novo synthesis. The sequence is that of Adenine phosphoribosyltransferase from Helicobacter pylori (strain J99 / ATCC 700824) (Campylobacter pylori J99).